The chain runs to 270 residues: 4-diphosphocytidyl-2-C-methyl-D-erythritol kinase (270 aa).

Lys8 is an active-site residue. 90–100 serves as a coordination point for ATP; that stretch reads PIGAGLGGGSS. Asp132 is a catalytic residue.

It belongs to the GHMP kinase family. IspE subfamily.

It catalyses the reaction 4-CDP-2-C-methyl-D-erythritol + ATP = 4-CDP-2-C-methyl-D-erythritol 2-phosphate + ADP + H(+). It participates in isoprenoid biosynthesis; isopentenyl diphosphate biosynthesis via DXP pathway; isopentenyl diphosphate from 1-deoxy-D-xylulose 5-phosphate: step 3/6. Its function is as follows. Catalyzes the phosphorylation of the position 2 hydroxy group of 4-diphosphocytidyl-2C-methyl-D-erythritol. The polypeptide is 4-diphosphocytidyl-2-C-methyl-D-erythritol kinase (Cytophaga hutchinsonii (strain ATCC 33406 / DSM 1761 / CIP 103989 / NBRC 15051 / NCIMB 9469 / D465)).